The chain runs to 65 residues: Beta-defensin 106A (65 aa).

The signal sequence occupies residues 1-20 (MRTFLFLFAVLFFLTPAKNA). Disulfide bonds link cysteine 26-cysteine 53, cysteine 33-cysteine 47, and cysteine 37-cysteine 54.

It belongs to the beta-defensin family. Monomer. Interacts with CCR2 (via extracellular N-terminal region); this interaction may preferentially require specific tyrosine sulfation on CCR2.

Its subcellular location is the secreted. The protein resides in the membrane. Its function is as follows. Has antibacterial activity. Acts as a ligand for C-C chemokine receptor CCR2. This is Beta-defensin 106A (DEFB106A) from Gorilla gorilla gorilla (Western lowland gorilla).